The primary structure comprises 558 residues: DEAD-box ATP-dependent RNA helicase 49 (558 aa).

Residues 16-44 (FSELKPPLSEDIIEALDRSGFEVCTPVQA) carry the Q motif motif. The 180-residue stretch at 47 to 226 (IPFLCSHKDV…KAGLRNAMEV (180 aa)) folds into the Helicase ATP-binding domain. Residue 60-67 (AATGSGKT) coordinates ATP. A DEAD box motif is present at residues 174 to 177 (DEAD). Residues 255–402 (QLVHLLIENK…ERKCSENASD (148 aa)) enclose the Helicase C-terminal domain. The tract at residues 506–558 (KDKLQQEKRGKRKKSSKEAVDDSNKASRKRKLTGRQRQTIQTAQDEEEMNLRL) is disordered. Basic and acidic residues predominate over residues 521–530 (SKEAVDDSNK). Over residues 549–558 (QDEEEMNLRL) the composition is skewed to acidic residues.

It belongs to the DEAD box helicase family. DDX55/SPB4 subfamily.

The enzyme catalyses ATP + H2O = ADP + phosphate + H(+). In Arabidopsis thaliana (Mouse-ear cress), this protein is DEAD-box ATP-dependent RNA helicase 49 (RH49).